The chain runs to 365 residues: 7-methylxanthine methyltransferase PCS1 (365 aa).

Y19 is a binding site for S-adenosyl-L-homocysteine. Residue T26 coordinates caffeine. The S-adenosyl-L-homocysteine site is built by C62, N67, D99, L100, S134, and F135. Residues Y152, H155, and W156 each coordinate caffeine. Residue N173 participates in Mg(2+) binding. Position 221 (H221) interacts with caffeine. D259, F261, and N262 together coordinate Mg(2+). F317 serves as a coordination point for caffeine.

This sequence belongs to the methyltransferase superfamily. Type-7 methyltransferase family. Mg(2+) serves as cofactor.

It catalyses the reaction 1,7-dimethylxanthine + S-adenosyl-L-methionine = caffeine + S-adenosyl-L-homocysteine + H(+). It carries out the reaction 7-methylxanthine + S-adenosyl-L-methionine = theobromine + S-adenosyl-L-homocysteine + H(+). It participates in alkaloid biosynthesis. Involved in the biosynthesis of caffeine. Catalyzes the conversion of 7-methylxanthine (7mX) to theobromine, and, to some extent, the conversion of paraxanthine to caffeine, but seems not able to convert theobromine to caffeine. The polypeptide is 7-methylxanthine methyltransferase PCS1 (Camellia ptilophylla (Cocoa tea)).